Reading from the N-terminus, the 92-residue chain is NELL2-interacting cell ontogeny regulator 1 (92 aa).

Positions 1 to 30 (MALPSAWSVMRVVIPFISVLGLLGVRLVGA) are cleaved as a signal peptide.

The protein belongs to the NICOL family.

The protein localises to the secreted. It localises to the cytoplasm. Its subcellular location is the perinuclear region. In terms of biological role, mRNA-binding protein which interacts with a range of target mRNAs and may promote extracellular matrix production. May function as a component of lumicrine signaling and may play a crucial role in epididymal-mediated sperm maturation and male fertility. In Gallus gallus (Chicken), this protein is NELL2-interacting cell ontogeny regulator 1.